Here is a 484-residue protein sequence, read N- to C-terminus: Siroheme synthase 1 (484 aa).

The interval M1–L205 is precorrin-2 dehydrogenase /sirohydrochlorin ferrochelatase. NAD(+) contacts are provided by residues E22–A23 and P43–V44. Residue S130 is modified to Phosphoserine. A uroporphyrinogen-III C-methyltransferase region spans residues G220 to D484. P229 contacts S-adenosyl-L-methionine. D252 (proton acceptor) is an active-site residue. K274 (proton donor) is an active-site residue. S-adenosyl-L-methionine-binding positions include G305 to D307, L310, S335 to A336, M387, and A416.

This sequence in the N-terminal section; belongs to the precorrin-2 dehydrogenase / sirohydrochlorin ferrochelatase family. It in the C-terminal section; belongs to the precorrin methyltransferase family.

It catalyses the reaction uroporphyrinogen III + 2 S-adenosyl-L-methionine = precorrin-2 + 2 S-adenosyl-L-homocysteine + H(+). The enzyme catalyses precorrin-2 + NAD(+) = sirohydrochlorin + NADH + 2 H(+). It carries out the reaction siroheme + 2 H(+) = sirohydrochlorin + Fe(2+). It functions in the pathway cofactor biosynthesis; adenosylcobalamin biosynthesis; precorrin-2 from uroporphyrinogen III: step 1/1. It participates in cofactor biosynthesis; adenosylcobalamin biosynthesis; sirohydrochlorin from precorrin-2: step 1/1. The protein operates within porphyrin-containing compound metabolism; siroheme biosynthesis; precorrin-2 from uroporphyrinogen III: step 1/1. Its pathway is porphyrin-containing compound metabolism; siroheme biosynthesis; siroheme from sirohydrochlorin: step 1/1. It functions in the pathway porphyrin-containing compound metabolism; siroheme biosynthesis; sirohydrochlorin from precorrin-2: step 1/1. Multifunctional enzyme that catalyzes the SAM-dependent methylations of uroporphyrinogen III at position C-2 and C-7 to form precorrin-2 via precorrin-1. Then it catalyzes the NAD-dependent ring dehydrogenation of precorrin-2 to yield sirohydrochlorin. Finally, it catalyzes the ferrochelation of sirohydrochlorin to yield siroheme. The protein is Siroheme synthase 1 of Halorhodospira halophila (strain DSM 244 / SL1) (Ectothiorhodospira halophila (strain DSM 244 / SL1)).